Here is a 296-residue protein sequence, read N- to C-terminus: CTD kinase subunit gamma (296 aa).

The tract at residues 25–44 is disordered; that stretch reads RDSITSSSTTTPPSSQQKLN. Low complexity predominate over residues 29 to 39; the sequence is TSSSTTTPPSS. T35 carries the post-translational modification Phosphothreonine.

It belongs to the CTK3 family. CTDK-I consists of three subunits, CTK1, CTK2 and CTK3 (also called alpha, beta and gamma). Interacts with CTK1. Heterodimerization with CTK2 is required to protect this subunit from degradation. Ubiquitinated. Ubiquitination leads to degradation by the 26S proteasome pathway.

Its subcellular location is the nucleus. The protein localises to the nucleolus. The protein resides in the cytoplasm. Its function is as follows. Gamma subunit of the CTDK-I complex, which hyperphosphorylates the C-terminal heptapeptide repeat domain (CTD) of the largest RNA polymerase II subunit. CTDK-I phosphorylates 'Ser-5' if the CTD substrate is not phosphorylated at 'Ser-5', but will phosphorylate 'Ser-2' of a CTD substrate if 'Ser-5' is already phosphorylated. CTDK-I is also more reactive toward substrates that are prephosphorylated at 'Ser-2' or 'Ser-5' compared with an unphosphorylated CTD substrate, therefore efficiently creating doubly phosphorylated CTD repeats. Involved in RNA polymerase I transcription and RNA polymerase II transcriptional elongation, and as part of the CTDK-I complex, pre-mRNA 3'-end processing and SET2 mediated H3K36 methylation. Together with CTK2, required for CTK1 CTD kinase activation. Required for DNA damage induced transcription. Involved in the adaptation to alternative carbon sources, including galactose, glycerol and ethanol, but not raffinose. Required for the integrity of the rDNA locus. This chain is CTD kinase subunit gamma (CTK3), found in Saccharomyces cerevisiae (strain ATCC 204508 / S288c) (Baker's yeast).